Here is a 512-residue protein sequence, read N- to C-terminus: Histidine ammonia-lyase (512 aa).

Positions 143–145 (CSG) form a cross-link, 5-imidazolinone (Cys-Gly). S144 is subject to 2,3-didehydroalanine (Ser).

This sequence belongs to the PAL/histidase family. Contains an active site 4-methylidene-imidazol-5-one (MIO), which is formed autocatalytically by cyclization and dehydration of residues Cys-Ser-Gly.

Its subcellular location is the cytoplasm. It carries out the reaction L-histidine = trans-urocanate + NH4(+). It functions in the pathway amino-acid degradation; L-histidine degradation into L-glutamate; N-formimidoyl-L-glutamate from L-histidine: step 1/3. The chain is Histidine ammonia-lyase from Streptomyces coelicolor (strain ATCC BAA-471 / A3(2) / M145).